A 287-amino-acid polypeptide reads, in one-letter code: Probable ribosomal RNA small subunit methyltransferase A (287 aa).

S-adenosyl-L-methionine is bound by residues His-29, Leu-31, Gly-56, Glu-77, Asp-102, and Asn-117.

The protein belongs to the class I-like SAM-binding methyltransferase superfamily. rRNA adenine N(6)-methyltransferase family. RsmA subfamily.

The protein resides in the cytoplasm. Functionally, specifically dimethylates two adjacent adenosines in the loop of a conserved hairpin near the 3'-end of 16S rRNA in the 30S particle. May play a critical role in biogenesis of 30S subunits. The protein is Probable ribosomal RNA small subunit methyltransferase A of Methanosarcina barkeri (strain Fusaro / DSM 804).